Here is a 350-residue protein sequence, read N- to C-terminus: MAISPRDEQNRSVDLWFAYKVPKLTKDADSDSASGYEYVYYDRQVGAVQKSPNLMNDPKGALFYTLDSVFGDPGDTTGWILYNDEMPADANRSNNATLGHTKGVIAFDIASSSALWLLHSWPKYASPSVPGVPTPLYGQTFLCLSLDLATAGKLAAQMALHQQPQVYLPRTGGLDHTSPLYALTQPLNASAPGDSDSLDFKTRGGVPFKVIAKNRKWGKDFWNDLVGPTLKADMYVETWIRGKIPPVLDSDGVHKTYDIKFIDLRKLGAPWAWPETQDHAKWGITTTDNWVCVGDINRMVTQEKRGGGTIAFQDPKLWKALCETDLIIPPPGKTDAQARAMIRKTHEPAE.

The protein belongs to the DNase II family.

The polypeptide is Putative deoxyribonuclease-2 (Burkholderia thailandensis (strain ATCC 700388 / DSM 13276 / CCUG 48851 / CIP 106301 / E264)).